The primary structure comprises 970 residues: MLGFLKRFFGSSQERILKKFQKLVDKVNIYDEMLTPLSDDELRNKTAELKQRYQNGESLDSMLPEAYGVVKNVCRRLAGTPVEVSGYHQRWDMVPYDVQILGAIAMHKGFITEMQTGEGKTLTAVMPLYLNALTGKPVHLVTVNDYLAQRDCEWVGSVLRWLGLTTGVLVSGTLLEKRKKIYQCDVVYGTASEFGFDYLRDNSIATRLEEQVGRGYYFAIIDEVDSILIDEARTPLIISGPGEKHNPVYFELKEKVASLVYLQKELCSRIALEARRGLDSFLDVDILPKDKKVLEGISEFCRSLWLVSKGMPLNRVLRRVREHPDLRAMIDKWDVYYHAEQNKEESLERLSELYIIVDEHNNDFELTDKGMQQWVEYAGGSTEEFVMMDMGHEYALIENDETLSPADKINKKIAISEEDTLRKARAHGLRQLLRAQLLMERDVDYIVRDDQIVIIDEHTGRPQPGRRFSEGLHQAIEAKEHVTIRKESQTLATVTLQNFFRLYEKLAGMTGTAITESREFKEIYNLYVLQVPTFKPCLRIDHNDEFYMTEREKYHAIVNEIATIHGKGNPILVGTESVEVSEKLSRILRQNRIEHTVLNAKNHAQEAEIIAGAGKLGAVTVATNMAGRGTDIKLDNEAVIVGGLHVIGTTRHQSRRIDRQLRGRCARLGDPGAAKFFLSFEDRLMRLFASPKLNTLIRHFRPPEGEAMSDPMFNRLIETAQKRVEGRNYTIRKHTLEYDDVMNKQRQAIYAFRHDVLHAESVFDLAKEILCHVSLMVASLVMSDRQFKGWTLPNLEEWITSSFPIALNIEELRQLKDTDSIAEKIAAELIQEFQVRFDHMVEGLSKAGGEELDASAICRDVVRSVMVMHIDEQWRIHLVDMDLLRSEVGLRTVGQKDPLLEFKHESFLLFESLIRDIRITIARHLFRLELTVEPNPRVNNVIPTVATSFHNNVNYGPLELTVVTDSEDQD.

ATP is bound by residues Q99, 117–121, and D631; that span reads GEGKT.

It belongs to the SecA family. As to quaternary structure, monomer and homodimer. Part of the essential Sec protein translocation apparatus which comprises SecA, SecYEG and auxiliary proteins SecDF. Other proteins may also be involved.

The protein localises to the cell inner membrane. It is found in the cytoplasm. It carries out the reaction ATP + H2O + cellular proteinSide 1 = ADP + phosphate + cellular proteinSide 2.. In terms of biological role, part of the Sec protein translocase complex. Interacts with the SecYEG preprotein conducting channel. Has a central role in coupling the hydrolysis of ATP to the transfer of proteins into and across the cell membrane, serving as an ATP-driven molecular motor driving the stepwise translocation of polypeptide chains across the membrane. This chain is Protein translocase subunit SecA, found in Chlamydia pneumoniae (Chlamydophila pneumoniae).